A 260-amino-acid chain; its full sequence is Large ribosomal subunit protein uL4 (260 aa).

The protein belongs to the universal ribosomal protein uL4 family. Part of the 50S ribosomal subunit.

In terms of biological role, one of the primary rRNA binding proteins, this protein initially binds near the 5'-end of the 23S rRNA. It is important during the early stages of 50S assembly. It makes multiple contacts with different domains of the 23S rRNA in the assembled 50S subunit and ribosome. Functionally, forms part of the polypeptide exit tunnel. This is Large ribosomal subunit protein uL4 from Methanopyrus kandleri (strain AV19 / DSM 6324 / JCM 9639 / NBRC 100938).